The sequence spans 233 residues: MPASPAAQLPAASLLQLIWLASPALPVGGFSYSEGLETAVERAGVTTEVLAGDWLRDQLHLSLARGDLAVIAQAIPAWRVGDVQRIRELNDWVLQTRETSEMRAQAEQMGRSLLDWLRNHDGANAQHITACAQMQPTYPVAFALAASQTAAGVRDCLLAYAFGWAENAMQAALKSVPLGQSAGQRMLARLASDIPTAVEAAISLPDDERQAFSPMLAILSSQHETQYSRLFRS.

Belongs to the UreF family. UreD, UreF and UreG form a complex that acts as a GTP-hydrolysis-dependent molecular chaperone, activating the urease apoprotein by helping to assemble the nickel containing metallocenter of UreC. The UreE protein probably delivers the nickel.

It localises to the cytoplasm. Functionally, required for maturation of urease via the functional incorporation of the urease nickel metallocenter. This Polaromonas sp. (strain JS666 / ATCC BAA-500) protein is Urease accessory protein UreF.